We begin with the raw amino-acid sequence, 119 residues long: Large ribosomal subunit protein bL20 (119 aa).

The protein belongs to the bacterial ribosomal protein bL20 family.

Its function is as follows. Binds directly to 23S ribosomal RNA and is necessary for the in vitro assembly process of the 50S ribosomal subunit. It is not involved in the protein synthesizing functions of that subunit. This Streptococcus thermophilus (strain ATCC BAA-491 / LMD-9) protein is Large ribosomal subunit protein bL20.